Reading from the N-terminus, the 192-residue chain is uncharacterized protein (192 aa).

This is an uncharacterized protein from Haemophilus influenzae (strain ATCC 51907 / DSM 11121 / KW20 / Rd).